The following is a 303-amino-acid chain: Dihydroorotate dehydrogenase B (NAD(+)), catalytic subunit (303 aa).

FMN is bound by residues Ser21 and 45–46 (KG). Substrate contacts are provided by residues Lys45 and 69 to 73 (NAVGL). Asn99 and Asn127 together coordinate FMN. Asn127 is a substrate binding site. Cys130 acts as the Nucleophile in catalysis. 2 residues coordinate FMN: Lys165 and Ile191. 192-193 (NT) lines the substrate pocket. Residues Gly217, 243–244 (GG), and 265–266 (GT) contribute to the FMN site.

It belongs to the dihydroorotate dehydrogenase family. Type 1 subfamily. In terms of assembly, heterotetramer of 2 PyrK and 2 PyrD type B subunits. FMN serves as cofactor.

It localises to the cytoplasm. It catalyses the reaction (S)-dihydroorotate + NAD(+) = orotate + NADH + H(+). The protein operates within pyrimidine metabolism; UMP biosynthesis via de novo pathway; orotate from (S)-dihydroorotate (NAD(+) route): step 1/1. Its function is as follows. Catalyzes the conversion of dihydroorotate to orotate with NAD(+) as electron acceptor. The protein is Dihydroorotate dehydrogenase B (NAD(+)), catalytic subunit (pyrD) of Bacteroides fragilis (strain ATCC 25285 / DSM 2151 / CCUG 4856 / JCM 11019 / LMG 10263 / NCTC 9343 / Onslow / VPI 2553 / EN-2).